Here is a 273-residue protein sequence, read N- to C-terminus: Dermonecrotic toxin LsaSicTox-alphaIB1aii (273 aa).

His-5 is a catalytic residue. Residues Glu-25 and Asp-27 each coordinate Mg(2+). Catalysis depends on His-41, which acts as the Nucleophile. Cystine bridges form between Cys-45/Cys-51 and Cys-47/Cys-190. Asp-85 serves as a coordination point for Mg(2+).

Belongs to the arthropod phospholipase D family. Class II subfamily. The cofactor is Mg(2+). As to expression, expressed by the venom gland.

It localises to the secreted. It carries out the reaction an N-(acyl)-sphingosylphosphocholine = an N-(acyl)-sphingosyl-1,3-cyclic phosphate + choline. The enzyme catalyses an N-(acyl)-sphingosylphosphoethanolamine = an N-(acyl)-sphingosyl-1,3-cyclic phosphate + ethanolamine. The catalysed reaction is a 1-acyl-sn-glycero-3-phosphocholine = a 1-acyl-sn-glycero-2,3-cyclic phosphate + choline. It catalyses the reaction a 1-acyl-sn-glycero-3-phosphoethanolamine = a 1-acyl-sn-glycero-2,3-cyclic phosphate + ethanolamine. Its function is as follows. Dermonecrotic toxins cleave the phosphodiester linkage between the phosphate and headgroup of certain phospholipids (sphingolipid and lysolipid substrates), forming an alcohol (often choline) and a cyclic phosphate. This toxin acts on sphingomyelin (SM). It may also act on ceramide phosphoethanolamine (CPE), lysophosphatidylcholine (LPC) and lysophosphatidylethanolamine (LPE), but not on lysophosphatidylserine (LPS), and lysophosphatidylglycerol (LPG). It acts by transphosphatidylation, releasing exclusively cyclic phosphate products as second products. Induces dermonecrosis, hemolysis, increased vascular permeability, edema, inflammatory response, and platelet aggregation. This chain is Dermonecrotic toxin LsaSicTox-alphaIB1aii, found in Loxosceles sabina (Tucson recluse spider).